Consider the following 334-residue polypeptide: UDP-N-acetylglucosamine 4,6-dehydratase (inverting) (334 aa).

NADP(+) contacts are provided by residues 13–16, 37–42, 61–62, A81, K85, and 123–124; these read TGSF, SRDELK, DV, and LS. K85 is a substrate binding site. K127 is a catalytic residue. NADP(+) contacts are provided by Y135 and K139. N167 contacts substrate. 168 to 172 provides a ligand contact to NADP(+); that stretch reads VVGSR. Substrate is bound by residues V175, T193, R252, and E255.

It belongs to the polysaccharide synthase family. As to quaternary structure, homohexamer. Requires NADP(+) as cofactor.

It carries out the reaction UDP-N-acetyl-alpha-D-glucosamine = UDP-2-acetamido-2,6-dideoxy-beta-L-arabino-hex-4-ulose + H2O. Its function is as follows. Catalyzes the first step in the biosynthesis of pseudaminic acid, a sialic-acid-like sugar that is used to modify flagellin. Has both C6 dehydratase and C5 epimerase activities that result in the production of both UDP-2-acetamido-2,6-dideoxy-beta-L-arabino-4-hexulose and UDP-2-acetamido-2,6-dideoxy-alpha-D-xylo-4-hexulose. The polypeptide is UDP-N-acetylglucosamine 4,6-dehydratase (inverting) (pseB) (Campylobacter jejuni subsp. jejuni serotype O:23/36 (strain 81-176)).